A 330-amino-acid polypeptide reads, in one-letter code: Serpentine receptor class J-38 (330 aa).

7 consecutive transmembrane segments (helical) span residues Ile6–Val26, Leu43–Ile63, Leu98–Tyr118, Leu135–Ala155, Thr200–Leu220, Ile253–Ile273, and Gly285–Phe305.

The protein belongs to the nematode receptor-like protein srj family.

Its subcellular location is the membrane. This Caenorhabditis elegans protein is Serpentine receptor class J-38 (srj-38).